A 325-amino-acid polypeptide reads, in one-letter code: Small ribosomal subunit protein uS4m (325 aa).

One can recognise an S4 RNA-binding domain in the interval 146–209 (KRIDMILLRS…HKQNLIHRLK (64 aa)).

The protein belongs to the universal ribosomal protein uS4 family.

It is found in the mitochondrion. The polypeptide is Small ribosomal subunit protein uS4m (mrps4) (Dictyostelium citrinum (Slime mold)).